The chain runs to 141 residues: HTH-type transcriptional repressor NsrR (141 aa).

The HTH rrf2-type domain occupies 2–129; sequence QLTNFTDFGL…DKHTIQDMLT (128 aa). The H-T-H motif DNA-binding region spans 28–51; the sequence is ITVVTETFDVSRNHMVKIINKLGQ. [2Fe-2S] cluster is bound by residues C91, C96, and C102.

[2Fe-2S] cluster serves as cofactor.

Its function is as follows. Nitric oxide-sensitive repressor of genes involved in protecting the cell against nitrosative stress. May require iron for activity. This chain is HTH-type transcriptional repressor NsrR, found in Aliivibrio fischeri (strain ATCC 700601 / ES114) (Vibrio fischeri).